The primary structure comprises 196 residues: MITVALIDDHLIVRSGFAQLLGLEPDLQVVAEFGSGREALAGLPGRGVQVCICDISMPDISGLELLSQLPKGMATIMLSVHDSPALVEQALNAGARGFLSKRCSPDELIAAVHTVATGGCYLTPDIAIKLASGRQDPLTKRERQVAEKLAQGMAVKEIAAELGLSPKTVHVHRANLMEKLGVSNDVELARRMFDGW.

Residues 3 to 116 (TVALIDDHLI…ELIAAVHTVA (114 aa)) form the Response regulatory domain. Aspartate 54 is subject to 4-aspartylphosphate. The region spanning 131 to 196 (ASGRQDPLTK…ELARRMFDGW (66 aa)) is the HTH luxR-type domain. The segment at residues 155 to 174 (VKEIAAELGLSPKTVHVHRA) is a DNA-binding region (H-T-H motif).

Phosphorylated and dephosphorylated by UhpB.

Its subcellular location is the cytoplasm. With respect to regulation, phosphorylation by UhpB enhances DNA binding activity. In terms of biological role, part of the UhpABC signaling cascade that controls the expression of the hexose phosphate transporter UhpT. Activates the transcription of the uhpT gene. Acts by binding specifically to the uhpT promoter region. This Escherichia coli (strain K12) protein is Transcriptional regulatory protein UhpA (uhpA).